We begin with the raw amino-acid sequence, 484 residues long: uncharacterized protein (484 aa).

A helical transmembrane segment spans residues 25–45 (PLSLFVVLAAVPLPIYFSGLL). Residues 384–419 (LSFEETKELWVRADLDGNGVFDYEELKKIWNMTMVN) enclose the EF-hand domain. Residues Asp397, Asp399, Asn401, and Glu408 each contribute to the Ca(2+) site.

The protein localises to the membrane. This is an uncharacterized protein from Arabidopsis thaliana (Mouse-ear cress).